The sequence spans 138 residues: Phosphoribosyl-AMP cyclohydrolase (138 aa).

Position 84 (Asp-84) interacts with Mg(2+). Cys-85 is a Zn(2+) binding site. Residues Asp-86 and Asp-88 each coordinate Mg(2+). Zn(2+) contacts are provided by Cys-102 and Cys-109.

It belongs to the PRA-CH family. In terms of assembly, homodimer. Requires Mg(2+) as cofactor. Zn(2+) is required as a cofactor.

It localises to the cytoplasm. The enzyme catalyses 1-(5-phospho-beta-D-ribosyl)-5'-AMP + H2O = 1-(5-phospho-beta-D-ribosyl)-5-[(5-phospho-beta-D-ribosylamino)methylideneamino]imidazole-4-carboxamide. It participates in amino-acid biosynthesis; L-histidine biosynthesis; L-histidine from 5-phospho-alpha-D-ribose 1-diphosphate: step 3/9. Functionally, catalyzes the hydrolysis of the adenine ring of phosphoribosyl-AMP. This chain is Phosphoribosyl-AMP cyclohydrolase, found in Burkholderia pseudomallei (strain K96243).